Here is a 155-residue protein sequence, read N- to C-terminus: HTH-type transcriptional repressor MdtR (155 aa).

The HTH marR-type domain occupies 4–140 (ADQLMSDIQL…AAHITAKLAQ (137 aa)). The segment at residues 54–77 (VSEIAERMEVKPSAVTLMADRLEQ) is a DNA-binding region (H-T-H motif).

In terms of assembly, homodimer.

Its subcellular location is the cytoplasm. With respect to regulation, the binding of MdtR to the mdtRP promoter region is severely inhibited by adding excess concentrations of fusidic acid or novobiocin but not by actinomycin or streptomycin. Its function is as follows. Repressor of the multidrug resistance operon mdtRP. Acts by binding directly to the mdtRP promoter region, leading to the repression of its expression. The sequence is that of HTH-type transcriptional repressor MdtR from Bacillus subtilis (strain 168).